The sequence spans 461 residues: Fumarate hydratase class II (461 aa).

Residues serine 98–threonine 100, histidine 129–aspartate 132, serine 139–asparagine 141, and threonine 187 contribute to the substrate site. Residues serine 120–serine 140 are disordered. Histidine 188 acts as the Proton donor/acceptor in catalysis. Serine 318 is a catalytic residue. Residues serine 319 and lysine 324–asparagine 326 each bind substrate.

This sequence belongs to the class-II fumarase/aspartase family. Fumarase subfamily. In terms of assembly, homotetramer.

It is found in the cytoplasm. The catalysed reaction is (S)-malate = fumarate + H2O. It functions in the pathway carbohydrate metabolism; tricarboxylic acid cycle; (S)-malate from fumarate: step 1/1. In terms of biological role, involved in the TCA cycle. Catalyzes the stereospecific interconversion of fumarate to L-malate. The polypeptide is Fumarate hydratase class II (Rickettsia felis (strain ATCC VR-1525 / URRWXCal2) (Rickettsia azadi)).